Consider the following 471-residue polypeptide: MSNAKTLYEKIYDAHVAVAAEGENPILYIDRHLVHEVTSPQAFDGLREKGRKVRQVGKTFATMDHNVSTQTKDINASGEMARIQMETLSKNCEEFGVTLYDLNHKYQGIVHVMGPELGITLPGMTIVCGDSHTATHGAFGSLAFGIGTSEVEHVLATQTLKQARAKTMKIDVKGKVAEGITAKDIVLAIIGKTTAAGGTGYVVEFCGEAITDLTMEGRMTVCNMAIELGAKAGLIAPDQTTFDYIAGRKFSPQDADLDAAIEYWSSLKTDDDAEFDAVVTLDASEIKPQVTWGTNPGQVIAVDAPIPAPESFADPVEKASAEKALAYMGLEAGKSLSDYNVDKVFVGSCTNSRIEDMRAAAAIAKGRKVASHVQALIVPGSEQVKAQAEKEGLDVIFKEAGFEWRLPGCSMCLAMNNDRLGPHERCASTSNRNFEGRQGRDGRTHLVSPAMAAAAAIAGHFVDIRTITEQA.

Positions 349, 409, and 412 each coordinate [4Fe-4S] cluster.

The protein belongs to the aconitase/IPM isomerase family. LeuC type 1 subfamily. Heterodimer of LeuC and LeuD. The cofactor is [4Fe-4S] cluster.

It carries out the reaction (2R,3S)-3-isopropylmalate = (2S)-2-isopropylmalate. It functions in the pathway amino-acid biosynthesis; L-leucine biosynthesis; L-leucine from 3-methyl-2-oxobutanoate: step 2/4. In terms of biological role, catalyzes the isomerization between 2-isopropylmalate and 3-isopropylmalate, via the formation of 2-isopropylmaleate. The polypeptide is 3-isopropylmalate dehydratase large subunit (Aliivibrio fischeri (strain ATCC 700601 / ES114) (Vibrio fischeri)).